The following is a 2434-amino-acid chain: ATP-binding cassette sub-family A member 2 (2434 aa).

Asparagine 14 carries N-linked (GlcNAc...) asparagine glycosylation. Helical transmembrane passes span 22 to 42 and 54 to 74; these read PWVL…LLGL and AFYT…QSLC. Asparagine 89, asparagine 168, and asparagine 173 each carry an N-linked (GlcNAc...) asparagine glycan. At glutamine 271 the chain carries N5-methylglutamine. Asparagine 305, asparagine 368, asparagine 379, asparagine 420, asparagine 432, asparagine 476, asparagine 484, asparagine 494, asparagine 530, asparagine 549, asparagine 590, asparagine 600, and asparagine 628 each carry an N-linked (GlcNAc...) asparagine glycan. Residues 354-369 show a composition bias toward low complexity; sequence RAPAPQAGSPSGPANS. Residues 354-396 form a disordered region; the sequence is RAPAPQAGSPSGPANSTGVGANTGPNTTVEEGTQSPVTPASPD. The span at 370–396 shows a compositional bias: polar residues; that stretch reads TGVGANTGPNTTVEEGTQSPVTPASPD. The next 6 helical transmembrane spans lie at 699-719, 750-770, 782-802, 813-833, 857-877, and 893-913; these read FLFV…VYSV, VAWF…LTAI, VLII…FCFL, ASAC…YVAI, AFGL…GIQW, and LLAV…TWYI. An ABC transporter 1 domain is found at 990–1221; it reads VCVDKLTKVY…YGDGYRLTLV (232 aa). 1024 to 1031 contacts ATP; sequence GHNGAGKT. The disordered stretch occupies residues 1225–1246; it reads AEPGTSQEPGMASSPSGRPQLS. A compositionally biased stretch (polar residues) spans 1228–1246; the sequence is GTSQEPGMASSPSGRPQLS. Serine 1238 is subject to Phosphoserine. The N-linked (GlcNAc...) asparagine glycan is linked to asparagine 1247. 2 positions are modified to phosphoserine: serine 1327 and serine 1331. Residues 1461-1481 traverse the membrane as a helical segment; that stretch reads ILLPAFFVCVAMTVALSVPEI. Residues asparagine 1496, asparagine 1549, and asparagine 1557 are each glycosylated (N-linked (GlcNAc...) asparagine). The disordered stretch occupies residues 1587 to 1606; that stretch reads NFVPPPPSPAPSDSPLSPDE. Residues 1589 to 1598 show a composition bias toward pro residues; the sequence is VPPPPSPAPS. Residues asparagine 1613, asparagine 1678, and asparagine 1776 are each glycosylated (N-linked (GlcNAc...) asparagine). 5 consecutive transmembrane segments (helical) span residues 1793-1813, 1842-1862, 1873-1893, 1906-1926, and 1992-2012; these read VVIA…FVVF, VWDM…LFVF, FPAV…IMYP, VFLI…TFLL, and GLVA…MCQY. The ABC transporter 2 domain maps to 2051–2286; sequence VKIENLTKVY…FGDGYMITVR (236 aa). Asparagine 2055 carries N-linked (GlcNAc...) asparagine glycosylation. Position 2088–2095 (2088–2095) interacts with ATP; it reads GVNGAGKT. The residue at position 2411 (threonine 2411) is a Phosphothreonine.

This sequence belongs to the ABC transporter superfamily. ABCA family. Post-translationally, N-glycosylated. In terms of processing, methylated at Gln-271 by N6AMT1. As to expression, expressed at high levels in brain, at moderate levels in heart, kidney and lung, and at low levels in skeletal muscle, stomach, spleen, colon and pancreas. Not detected in the liver or small intestine. In brain, highly expressed in white matter and detected in oligodendrocytes. Expressed in cerebellum as well as the anterior commissure. Expressed mainly in the white matter but is also scattered in gray matter throughout the whole brain. Expressed in myelinating cells of both ventral and dorsal restricted regions in newborn spinal cord. Expressed in non-myelin-forming as well as in myelin-forming Schwann cells in the sciatic nerve.

The protein localises to the endosome membrane. It localises to the lysosome membrane. Its function is as follows. Probable transporter, its natural substrate has not been found yet. May have a role in macrophage lipid metabolism and neural development. May play a role in myelination, perhaps as a transporter for certain kinds of myelin chemical components. May play an important role in gamma-secretase processing of APP and thus in amyloid-beta peptide generation. Regulates esterification of plasma membrane cholesterol by modulation of sphingolipid metabolism. Functionally, probable lipid transporter that modulates cholesterol sequestration in the late endosome/lysosome by regulating the intracellular sphingolipid metabolism, in turn participates in cholesterol homeostasis. May alter the transbilayer distribution of ceramide in the intraluminal membrane lipid bilayer, favoring its retention in the outer leaflet that results in increased acid ceramidase activity in the late endosome/lysosome, facilitating ceramide deacylation to sphingosine leading to the sequestration of free cholesterol in lysosomes. In addition regulates amyloid-beta production either by activating a signaling pathway that regulates amyloid precursor protein transcription through the modulation of sphingolipid metabolism or through its role in gamma-secretase processing of APP. May play a role in myelin formation. The sequence is that of ATP-binding cassette sub-family A member 2 from Rattus norvegicus (Rat).